We begin with the raw amino-acid sequence, 1134 residues long: Protocadherin 18 (1134 aa).

An N-terminal signal peptide occupies residues 1–27 (MHQMNTKMHFRFALALLMAFFSHDVLA). 6 Cadherin domains span residues 28–137 (KNLK…SPQF), 138–246 (SRPV…SPAF), 247–354 (EQPS…KPEI), 361–465 (PGKE…PPRF), 466–576 (QRSR…VPVV), and 582–688 (HNNT…STAM). Residues 28–699 (KNLKYRIYEE…SVSRASLDVS (672 aa)) lie on the Extracellular side of the membrane. Asn103 is a glycosylation site (N-linked (GlcNAc...) asparagine). A glycan (N-linked (GlcNAc...) asparagine) is linked at Asn269. Asn559 carries N-linked (GlcNAc...) asparagine glycosylation. The helical transmembrane segment at 700–720 (MIIIISLGAICAVLLVIMVLF) threads the bilayer. The Cytoplasmic portion of the chain corresponds to 721–1134 (ATRCNREKKD…NKLLQDVRQS (414 aa)). 4 disordered regions span residues 769–800 (LPIR…NSHQ), 868–888 (SLKD…DLGR), 941–1004 (DYRS…SSLL), and 1022–1083 (FSEC…PSSK). Polar residues predominate over residues 791–800 (GSRQSHNSHQ). The span at 868-877 (SLKDSGRGDS) shows a compositional bias: basic and acidic residues. Residues 892-1134 (IDRLLGEGFS…NKLLQDVRQS (243 aa)) are interaction with DAB1. A compositionally biased stretch (basic and acidic residues) spans 1027–1038 (EGDRSNSLERRK). Over residues 1059 to 1082 (THFQNPTSSSGTPLGTHSSVQPSS) the composition is skewed to polar residues.

As to quaternary structure, interacts with DAB1. Predominantly expressed in kidney and lung.

Its subcellular location is the cell membrane. Functionally, potential calcium-dependent cell-adhesion protein. This Mus musculus (Mouse) protein is Protocadherin 18 (Pcdh18).